The following is a 1277-amino-acid chain: NPC intracellular cholesterol transporter 1 (1277 aa).

Positions M1–S22 are cleaved as a signal peptide. The Lumenal segment spans residues Q23–Y269. Intrachain disulfides connect C25–C74, C31–C42, C63–C109, C75–C113, C97–C238, C100–C160, C177–C184, C227–C243, and C240–C247. Position 41 (N41) interacts with cholesterol. An N-linked (GlcNAc...) asparagine glycan is attached at N70. Q79 contributes to the cholesterol binding site. Residues N122 and N135 are each glycosylated (N-linked (GlcNAc...) asparagine). Residues L175–I205 are important for cholesterol binding and cholesterol transfer from NPC1 to liposomes. N185 and N222 each carry an N-linked (GlcNAc...) asparagine glycan. A helical transmembrane segment spans residues V270–V290. Over W291–P350 the chain is Cytoplasmic. A helical transmembrane segment spans residues G351 to I371. The Lumenal portion of the chain corresponds to R372–L621. 4 N-linked (GlcNAc...) asparagine glycosylation sites follow: N415, N452, N459, and N478. 2 cysteine pairs are disulfide-bonded: C468–C479 and C516–C533. Residues D620–L785 form the SSD domain. The helical transmembrane segment at F622 to I642 threads the bilayer. Residues K643 to K653 lie on the Cytoplasmic side of the membrane. A helical transmembrane segment spans residues I654–I674. Residues F675–Y677 lie on the Lumenal side of the membrane. The chain crosses the membrane as a helical span at residues I678–G698. Topologically, residues V699–S734 are cytoplasmic. A helical transmembrane segment spans residues M735–P755. At A756–T759 the chain is on the lumenal side. A helical membrane pass occupies residues F760–V780. Topologically, residues S781–D832 are cytoplasmic. The chain crosses the membrane as a helical span at residues W833–L853. Residues N854 to T1097 are Lumenal-facing. N-linked (GlcNAc...) asparagine glycosylation is present at N898. C909 and C914 are oxidised to a cystine. N-linked (GlcNAc...) asparagine glycosylation is found at N916, N931, N961, N968, N1028, and N1063. 3 cysteine pairs are disulfide-bonded: C956-C1011, C957-C979, and C967-C976. The helical transmembrane segment at I1098–C1118 threads the bilayer. Residues E1119–T1123 lie on the Cytoplasmic side of the membrane. A helical transmembrane segment spans residues V1124 to W1144. A topological domain (lumenal) is located at residue G1145. The chain crosses the membrane as a helical span at residues I1146–F1166. Residues C1167–G1194 lie on the Cytoplasmic side of the membrane. The chain crosses the membrane as a helical span at residues S1195–A1215. The Lumenal portion of the chain corresponds to K1216–R1226. Residues M1227–L1247 form a helical membrane-spanning segment. Residues S1248–F1277 lie on the Cytoplasmic side of the membrane. The tract at residues L1274–F1277 is required for location in lysosomes. The short motif at L1274–F1277 is the Di-leucine motif element.

Belongs to the patched family. Interacts (via the second lumenal domain) with NPC2. Interacts with TMEM97; the interaction may decrease NPC1 availability to the cell. Interacts with TIM1. Interacts with SLC38A9; this interaction inhibits cholesterol-mediated mTORC1 activation via its sterol transport activity. Post-translationally, N-glycosylated. In terms of tissue distribution, detected in corpus luteum, granulosa cells and adrenal gland.

The protein localises to the late endosome membrane. It localises to the lysosome membrane. The catalysed reaction is cholesterol(in) = cholesterol(out). In terms of biological role, intracellular cholesterol transporter which acts in concert with NPC2 and plays an important role in the egress of cholesterol from the endosomal/lysosomal compartment. Unesterified cholesterol that has been released from LDLs in the lumen of the late endosomes/lysosomes is transferred by NPC2 to the cholesterol-binding pocket in the N-terminal domain of NPC1. Cholesterol binds to NPC1 with the hydroxyl group buried in the binding pocket. Binds oxysterol with higher affinity than cholesterol. May play a role in vesicular trafficking in glia, a process that may be crucial for maintaining the structural and functional integrity of nerve terminals. Inhibits cholesterol-mediated mTORC1 activation throught its interaction with SLC38A9. This chain is NPC intracellular cholesterol transporter 1, found in Sus scrofa (Pig).